The sequence spans 158 residues: Transcriptional repressor NrdR (158 aa).

A zinc finger lies at 3-34; sequence CPYCQSEDTQVKDSRPAEDGAVIRRRRVCSVC. One can recognise an ATP-cone domain in the interval 49 to 139; it reads LMVVKKSGRR…VYRNFSKAVD (91 aa).

This sequence belongs to the NrdR family. The cofactor is Zn(2+).

Functionally, negatively regulates transcription of bacterial ribonucleotide reductase nrd genes and operons by binding to NrdR-boxes. The chain is Transcriptional repressor NrdR from Brucella abortus (strain S19).